Reading from the N-terminus, the 110-residue chain is Small ribosomal subunit protein bS18 (110 aa).

A compositionally biased stretch (low complexity) spans 1–18 (MSEATTTTTTTSAPRPGG). A disordered region spans residues 1 to 41 (MSEATTTTTTTSAPRPGGRPSGPRPDRGPGGPRKKRPFQRR). Residues 32-41 (PRKKRPFQRR) are compositionally biased toward basic residues.

It belongs to the bacterial ribosomal protein bS18 family. In terms of assembly, part of the 30S ribosomal subunit. Forms a tight heterodimer with protein bS6.

In terms of biological role, binds as a heterodimer with protein bS6 to the central domain of the 16S rRNA, where it helps stabilize the platform of the 30S subunit. The chain is Small ribosomal subunit protein bS18 from Trichlorobacter lovleyi (strain ATCC BAA-1151 / DSM 17278 / SZ) (Geobacter lovleyi).